The chain runs to 517 residues: 2-isopropylmalate synthase (517 aa).

Residues 5–268 (IIIFDTTLRD…DTRINTQEIH (264 aa)) enclose the Pyruvate carboxyltransferase domain. Mn(2+) contacts are provided by Asp14, His202, His204, and Asn238. The segment at 393–517 (SLDVITSQTI…ADLKSHKISQ (125 aa)) is regulatory domain.

It belongs to the alpha-IPM synthase/homocitrate synthase family. LeuA type 1 subfamily. As to quaternary structure, homodimer. Requires Mn(2+) as cofactor.

Its subcellular location is the cytoplasm. It carries out the reaction 3-methyl-2-oxobutanoate + acetyl-CoA + H2O = (2S)-2-isopropylmalate + CoA + H(+). It participates in amino-acid biosynthesis; L-leucine biosynthesis; L-leucine from 3-methyl-2-oxobutanoate: step 1/4. In terms of biological role, catalyzes the condensation of the acetyl group of acetyl-CoA with 3-methyl-2-oxobutanoate (2-ketoisovalerate) to form 3-carboxy-3-hydroxy-4-methylpentanoate (2-isopropylmalate). The polypeptide is 2-isopropylmalate synthase (Histophilus somni (strain 2336) (Haemophilus somnus)).